The following is a 693-amino-acid chain: Testis-specific Y-encoded-like protein 2 (693 aa).

Disordered stretches follow at residues 1–56 (MDRP…EAAQ) and 104–125 (GYGE…EASG). K11 is covalently cross-linked (Glycyl lysine isopeptide (Lys-Gly) (interchain with G-Cter in SUMO2)). S18 and S20 each carry phosphoserine. Residues 23–44 (RDPPPPPPPPPLLRLPLPPPQQ) show a composition bias toward pro residues. Glycyl lysine isopeptide (Lys-Gly) (interchain with G-Cter in SUMO2) cross-links involve residues K163 and K165. The segment at 175–207 (EDEDERESMRSSRRRRRRRRRKQRKVKRESRER) is disordered. Residues 185–202 (SSRRRRRRRRRKQRKVKR) show a composition bias toward basic residues. The residue at position 340 (T340) is a Phosphothreonine. 2 disordered regions span residues 474–605 (ENIC…DIEY) and 627–693 (ISDE…GKTG). Positions 487–496 (VPNNETTDNN) are enriched in polar residues. Residues 509-519 (ESADDNNENPE) show a composition bias toward acidic residues. Positions 531–542 (NPNNNENTYGNN) are enriched in low complexity. Composition is skewed to acidic residues over residues 559-602 (SDSD…DDRD) and 627-675 (ISDE…DLED). S658, S668, and S671 each carry phosphoserine.

Belongs to the nucleosome assembly protein (NAP) family. In terms of assembly, interacts with histones. Interacts with CASK. Part of a complex containing CASK, TBR1 and TSPYL2. Phosphorylation at Ser-20 and/or Thr-340 impairs function on cell proliferation. As to expression, ubiquitously expressed, with highest levels in brain, testis and heart, and lowest levels in liver and pancreas.

Its subcellular location is the nucleus. It localises to the cytoplasm. Its function is as follows. Part of the CASK/TBR1/TSPYL2 transcriptional complex which modulates gene expression in response to neuronal synaptic activity, probably by facilitating nucleosome assembly. May inhibit cell proliferation by inducing p53-dependent CDKN1A expression. The chain is Testis-specific Y-encoded-like protein 2 (TSPYL2) from Homo sapiens (Human).